A 727-amino-acid polypeptide reads, in one-letter code: Glycerol-3-phosphate dehydrogenase, mitochondrial (727 aa).

A mitochondrion-targeting transit peptide spans 1–42; the sequence is MAFQKAVKGTILVGGGALATVLGLSHFAHYKRKQVNLAFVEA. 71-99 provides a ligand contact to FAD; the sequence is DVLVIGGGATGSGCALDAVTRGLKTALVE. Phosphotyrosine is present on Y601. 2 EF-hand domains span residues 623–658 and 659–694; these read SDID…IGVQ and MDEN…IQKG. 5 residues coordinate Ca(2+): D672, N674, N676, Q678, and E683.

It belongs to the FAD-dependent glycerol-3-phosphate dehydrogenase family. The cofactor is FAD.

The protein resides in the mitochondrion. It catalyses the reaction a quinone + sn-glycerol 3-phosphate = dihydroxyacetone phosphate + a quinol. It functions in the pathway polyol metabolism; glycerol degradation via glycerol kinase pathway; glycerone phosphate from sn-glycerol 3-phosphate (aerobic route): step 1/1. Calcium-binding enhance the activity of the enzyme. Its function is as follows. Calcium-responsive mitochondrial glycerol-3-phosphate dehydrogenase which seems to be a key component of the pancreatic beta-cell glucose-sensing device. The chain is Glycerol-3-phosphate dehydrogenase, mitochondrial (GPD2) from Bos taurus (Bovine).